The chain runs to 180 residues: DNA-directed RNA polymerase subunit Rpo7 (180 aa).

In terms of domain architecture, S1 motif spans 82–165 (QEVVEGEVLQ…RLPRIALTMR (84 aa)).

The protein belongs to the eukaryotic RPB7/RPC8 RNA polymerase subunit family. As to quaternary structure, part of the 13-subunit RNA polymerase complex. Forms a stalk with Rpo4 that extends from the main structure.

The protein resides in the cytoplasm. It catalyses the reaction RNA(n) + a ribonucleoside 5'-triphosphate = RNA(n+1) + diphosphate. DNA-dependent RNA polymerase (RNAP) catalyzes the transcription of DNA into RNA using the four ribonucleoside triphosphates as substrates. The highly mobile Rpo4/Rpo7 heterodimer is conditionally required for transcription initiation. In Saccharolobus shibatae (strain ATCC 51178 / DSM 5389 / JCM 8931 / NBRC 15437 / B12) (Sulfolobus shibatae), this protein is DNA-directed RNA polymerase subunit Rpo7.